A 371-amino-acid chain; its full sequence is Alanine dehydrogenase (371 aa).

Arg-15 and Lys-74 together coordinate substrate. Residue His-95 is the Proton donor/acceptor of the active site. Residues Ser-133, 177-178 (QA), Asp-197, Ser-219, 238-239 (VL), 266-269 (IAID), Arg-279, and 298-301 (VANM) each bind NAD(+). Residue Asp-269 is the Proton donor/acceptor of the active site.

It belongs to the AlaDH/PNT family. Homohexamer. Trimer of dimer.

It catalyses the reaction L-alanine + NAD(+) + H2O = pyruvate + NH4(+) + NADH + H(+). It participates in amino-acid degradation; L-alanine degradation via dehydrogenase pathway; NH(3) and pyruvate from L-alanine: step 1/1. In terms of biological role, catalyzes the reversible reductive amination of pyruvate to L-alanine. May play a role in cell wall synthesis as L-alanine is an important constituent of the peptidoglycan layer. The sequence is that of Alanine dehydrogenase (ald) from Staphylococcus saprophyticus subsp. saprophyticus (strain ATCC 15305 / DSM 20229 / NCIMB 8711 / NCTC 7292 / S-41).